The sequence spans 1430 residues: 3'-5' RNA helicase YTHDC2 (1430 aa).

The segment at 1-37 (MSRPSSVSPRQPAPGGGGGGGPSPCGPGGGGRAKGLK) is disordered. The span at 14-33 (PGGGGGGGPSPCGPGGGGRA) shows a compositional bias: gly residues. Residues 38–106 (DIRIDEEVKI…NRYLTVKKKD (69 aa)) form the R3H domain. Residues 203–369 (VKIIKENKVV…FGSCPVIYIQ (167 aa)) form the Helicase ATP-binding domain. 216–223 (GETGSGKT) is a binding site for ATP. The DEAH box motif lies at 316-319 (DEVH). ANK repeat units lie at residues 506 to 538 (TSATALMVAAGRGFASQVEQLISMGANVHSKAS) and 539 to 571 (NGWMALDWAKHFGQTEIVDLLESYSASLEFGNL). One can recognise a Helicase C-terminal domain in the interval 612-784 (LLYNICHSCD…ELCLHTKLLA (173 aa)). Ser-1089, Ser-1090, and Ser-1092 each carry phosphoserine. A compositionally biased stretch (polar residues) spans 1164–1174 (EQSAGLQQPSG). The segment at 1164 to 1288 (EQSAGLQQPS…SPSPRPNMPV (125 aa)) is disordered. Over residues 1191-1200 (SSWRSNNSRK) the composition is skewed to low complexity. Ser-1202 is modified (phosphoserine). The segment covering 1231–1249 (KYKDRGILHPKRGTEDRSD) has biased composition (basic and acidic residues). The span at 1250 to 1264 (QSSVKSTDSSSYPSP) shows a compositional bias: low complexity. A phosphoserine mark is found at Ser-1263, Ser-1267, and Ser-1281. The YTH domain occupies 1288–1418 (VRYFIMKSSN…QVGEQLLQLW (131 aa)). Residues 1294–1296 (KSS), Trp-1310, and Trp-1360 contribute to the RNA site.

It belongs to the DEAD box helicase family. DEAH subfamily. In terms of assembly, interacts with MEIOC; binds transcripts that regulate the mitotic cell cycle inhibiting progression into metaphase, thereby allowing meiotic prophase to proceed normally. Interacts (via ANK repeats) with XRN1. Interacts with ZCCHC4. Associates with the small ribosomal subunit. Interacts with RBM46.

The protein localises to the cytoplasm. The protein resides in the perinuclear region. It carries out the reaction ATP + H2O = ADP + phosphate + H(+). Functionally, 3'-5' RNA helicase that plays a key role in the male and female germline by promoting transition from mitotic to meiotic divisions in stem cells. Specifically recognizes and binds N6-methyladenosine (m6A)-containing RNAs, a modification present at internal sites of mRNAs and some non-coding RNAs that plays a role in the efficiency of RNA processing and stability. Essential for ensuring a successful progression of the meiotic program in the germline by regulating the level of m6A-containing RNAs. Acts by binding and promoting degradation of m6A-containing mRNAs: the 3'-5' RNA helicase activity is required for this process and RNA degradation may be mediated by XRN1 exoribonuclease. Required for both spermatogenesis and oogenesis. The polypeptide is 3'-5' RNA helicase YTHDC2 (Pongo abelii (Sumatran orangutan)).